Consider the following 202-residue polypeptide: Protein phosphatase inhibitor 2 family member C (202 aa).

2 disordered regions span residues 1 to 51 (MSAS…DESS) and 71 to 118 (PGTS…EQES). Residues 12–17 (KGILKN) are required for binding PPP1CC. The span at 19–35 (SSSGSSVATSGQQSGGT) shows a compositional bias: low complexity. The required for binding PPP1CC stretch occupies residues 43 to 55 (KSQKWDESSILAA). Residues 71–80 (PGTSYMSVQD) show a composition bias toward polar residues. A compositionally biased stretch (basic and acidic residues) spans 84-112 (DSVRDVEGEDSVRGVEGKEATDASDHSCE). The required for binding PPP1CC catalytic center, displacing metal ions and inhibition of PPP1CC catalytic activity stretch occupies residues 144-147 (HYNE). The tract at residues 162 to 202 (LQSEDNENEETPQGTNEEKTAAEESEEAPLTGGLQTQSCDP) is disordered.

It belongs to the protein phosphatase inhibitor 2 family. As to expression, detected in sperm (at protein level).

Its function is as follows. Functions as a protein phosphatase inhibitor. It inhibits activity of the catalytic subunit of PP1 and weakly inhibits the activity of myosin-associated phosphates. In Homo sapiens (Human), this protein is Protein phosphatase inhibitor 2 family member C.